Here is a 211-residue protein sequence, read N- to C-terminus: Thymidylate kinase (211 aa).

10-17 is a binding site for ATP; that stretch reads GVEGCGKT.

This sequence belongs to the thymidylate kinase family.

It carries out the reaction dTMP + ATP = dTDP + ADP. Its function is as follows. Phosphorylation of dTMP to form dTDP in both de novo and salvage pathways of dTTP synthesis. The chain is Thymidylate kinase from Nostoc sp. (strain PCC 7120 / SAG 25.82 / UTEX 2576).